A 364-amino-acid chain; its full sequence is Peptide chain release factor 1 (364 aa).

Gln238 is modified (N5-methylglutamine).

The protein belongs to the prokaryotic/mitochondrial release factor family. In terms of processing, methylated by PrmC. Methylation increases the termination efficiency of RF1.

It is found in the cytoplasm. Functionally, peptide chain release factor 1 directs the termination of translation in response to the peptide chain termination codons UAG and UAA. The sequence is that of Peptide chain release factor 1 from Psychrobacter sp. (strain PRwf-1).